The sequence spans 405 residues: Bifunctional enzyme IspD/IspF (405 aa).

Positions 1-246 (MLQMPSKQPI…KLSASLLPDV (246 aa)) are 2-C-methyl-D-erythritol 4-phosphate cytidylyltransferase. The segment at 247 to 405 (RTGNGYDVHQ…TATVVYRGRT (159 aa)) is 2-C-methyl-D-erythritol 2,4-cyclodiphosphate synthase. The a divalent metal cation site is built by Asp-253 and His-255. Residues 253-255 (DVH) and 279-280 (HS) contribute to the 4-CDP-2-C-methyl-D-erythritol 2-phosphate site. His-287 lines the a divalent metal cation pocket. Residues 301 to 303 (DIG), 377 to 380 (TTNE), Phe-384, and Arg-387 contribute to the 4-CDP-2-C-methyl-D-erythritol 2-phosphate site.

This sequence in the N-terminal section; belongs to the IspD/TarI cytidylyltransferase family. IspD subfamily. It in the C-terminal section; belongs to the IspF family. It depends on a divalent metal cation as a cofactor.

The enzyme catalyses 2-C-methyl-D-erythritol 4-phosphate + CTP + H(+) = 4-CDP-2-C-methyl-D-erythritol + diphosphate. It carries out the reaction 4-CDP-2-C-methyl-D-erythritol 2-phosphate = 2-C-methyl-D-erythritol 2,4-cyclic diphosphate + CMP. The protein operates within isoprenoid biosynthesis; isopentenyl diphosphate biosynthesis via DXP pathway; isopentenyl diphosphate from 1-deoxy-D-xylulose 5-phosphate: step 2/6. It participates in isoprenoid biosynthesis; isopentenyl diphosphate biosynthesis via DXP pathway; isopentenyl diphosphate from 1-deoxy-D-xylulose 5-phosphate: step 4/6. Bifunctional enzyme that catalyzes the formation of 4-diphosphocytidyl-2-C-methyl-D-erythritol from CTP and 2-C-methyl-D-erythritol 4-phosphate (MEP) (IspD), and catalyzes the conversion of 4-diphosphocytidyl-2-C-methyl-D-erythritol 2-phosphate (CDP-ME2P) to 2-C-methyl-D-erythritol 2,4-cyclodiphosphate (ME-CPP) with a corresponding release of cytidine 5-monophosphate (CMP) (IspF). This Rhizobium etli (strain CIAT 652) protein is Bifunctional enzyme IspD/IspF.